We begin with the raw amino-acid sequence, 256 residues long: MNDIWWQTYGEGNCHLVLLHGWGLNAEVWHCIREELGSHFTLHLVDLPGYGRSSGFGAMTLEEMTAQVAKNAPDQAIWLGWSLGGLVASQMALTHPERVQALVTVASSPCFSAREGWPGIKPEILGGFQQQLSDDFQRTVERFLALQTLGTETARQDARTLKSVVLAQPMPDVEVLNGGLEILKTVDLREALKNVNMPFLRLYGYLDGLVPRKIVPLLDTLWPHSTSQIMAKAAHAPFISHPAAFCQALMTLKSSL.

Residues 15-242 (HLVLLHGWGL…AAHAPFISHP (228 aa)) enclose the AB hydrolase-1 domain. Substrate-binding positions include tryptophan 22, 82-83 (SL), and 143-147 (FLALQ). The Nucleophile role is filled by serine 82. Residues aspartate 207 and histidine 235 contribute to the active site. Histidine 235 serves as a coordination point for substrate.

This sequence belongs to the AB hydrolase superfamily. Carboxylesterase BioH family. In terms of assembly, monomer.

The protein resides in the cytoplasm. It catalyses the reaction 6-carboxyhexanoyl-[ACP] methyl ester + H2O = 6-carboxyhexanoyl-[ACP] + methanol + H(+). It functions in the pathway cofactor biosynthesis; biotin biosynthesis. Functionally, the physiological role of BioH is to remove the methyl group introduced by BioC when the pimeloyl moiety is complete. It allows to synthesize pimeloyl-ACP via the fatty acid synthetic pathway through the hydrolysis of the ester bonds of pimeloyl-ACP esters. This Salmonella dublin (strain CT_02021853) protein is Pimeloyl-[acyl-carrier protein] methyl ester esterase.